The chain runs to 486 residues: MFFFSTHLILKILFFWSITRNIFGATYTSLLLNNTINGNINDQSTAYYNLTWEGNTAYNVSLTLSTCTAFDGANDLMLYISNNTFDEALPLDNFTITASENGLATIFVTGYSPLYIAVSSAFSQFAPNFFVESGESTLEGNNVINYELAAGIDTPFSQYNATKFLFAQDTDFQAALLITGNLTTNETSIIPSYEIYVNPSNSTYDNTFNKFSSSFCAFQNNPSTVNTNNADRSMTLRGLGPFAKEQFYLKGLDPNVTYTAYLVEPNIGQPGGTVYPGVTFTTKTSPACQLIYDLQFCSEVAYAVPGNSSLFSASALAEWYDQQAYGYYQNFTYTLDLIPCNATSWSAYSLLKNCSDCANSYKNWLCASVIPRCADINDNSSYLIYKNYDSRYPLIDEVIQPGPYKEVLPCSYLCYSLASSCPLDLGFACPKAGYGLEFSYGEVSNVTGLITCNAPGVEFYESGSALLNISWRTFFISLIFWILFVE.

A signal peptide spans 1–24; the sequence is MFFFSTHLILKILFFWSITRNIFG. Over 25 to 464 the chain is Extracellular; that stretch reads ATYTSLLLNN…PGVEFYESGS (440 aa). N-linked (GlcNAc...) asparagine glycosylation is found at N33, N49, N59, N82, and N93. The chain crosses the membrane as a helical span at residues 465–485; sequence ALLNISWRTFFISLIFWILFV. Residue E486 is a topological domain, cytoplasmic.

The protein resides in the cell membrane. Functionally, calcium-permeable, cation-selective stretch-activated channel (SAC) that functions together with CCH1 to mediate calcium entry into cells. Required during mating. This chain is Stretch-activated cation channel yam8, found in Schizosaccharomyces pombe (strain 972 / ATCC 24843) (Fission yeast).